Consider the following 373-residue polypeptide: SWI/SNF-related matrix-associated actin-dependent regulator of chromatin subfamily B member 1-A (373 aa).

The segment at 1–101 (MALSKTYGQK…DEKYKAVSIS (101 aa)) is DNA-binding.

It belongs to the SNF5 family. In terms of assembly, component of the multiprotein chromatin-remodeling complexes SWI/SNF. Component of neural progenitors-specific chromatin remodeling complex (npBAF complex) and the neuron-specific chromatin remodeling complex (nBAF complex). Component of the BAF (SWI/SNF) chromatin remodeling complex. Component of the SWI/SNF-B (PBAF) chromatin remodeling complex. Binds to double-stranded DNA.

It localises to the nucleus. Functionally, involved in chromatin-remodeling. Core component of the BAF (SWI/SNF) complex. This ATP-dependent chromatin-remodeling complex plays important roles in cell proliferation and differentiation, in cellular antiviral activities and inhibition of tumor formation. Belongs to the neural progenitors-specific chromatin remodeling complex (npBAF complex) and the neuron-specific chromatin remodeling complex (nBAF complex) and may play a role in neural development. The chain is SWI/SNF-related matrix-associated actin-dependent regulator of chromatin subfamily B member 1-A (smarcb1a) from Danio rerio (Zebrafish).